Reading from the N-terminus, the 333-residue chain is MATSMLGSVPGPRPFGLAGLFRRRPPRDPWERVRRLPRLSAVRRSVAAASGPGIPDSHLYCLELLRKRDYESYLCSLLFPAECQRSASALRAFNVELAQVKDSVSEKTIGLMRMQFWRKAVEDMFCDNPPHQPVAMELWKAVKRHNLTKRWLLRIIDEREKNLDDKAYRSIRELETYAENTQSSLLYLTLEVLGVKDVHADHAASHIGKAQGIVTCLRATPYHSSRRQVFLPMDVCVQHGVSQEDFLRRNQDKNVRDVVYDIASQAHLHLKHARSFHSRVPAEAFPAFLQTVSLEDYLKKIQRVDFDIFHPSLQQKNTLLPLSLYIQSWRKRY.

The transit peptide at 1-44 (MATSMLGSVPGPRPFGLAGLFRRRPPRDPWERVRRLPRLSAVRR) directs the protein to the mitochondrion.

It belongs to the NDUFAF6 family.

The protein resides in the mitochondrion inner membrane. Involved in the assembly of mitochondrial NADH:ubiquinone oxidoreductase complex (complex I) at early stages. May play a role in the biogenesis of complex I subunit MT-ND1. In Rattus norvegicus (Rat), this protein is NADH dehydrogenase (ubiquinone) complex I, assembly factor 6 (Ndufaf6).